Consider the following 480-residue polypeptide: Protein nucleotidyltransferase YdiU (480 aa).

Glycine 86, glycine 88, arginine 89, lysine 109, aspartate 121, glycine 122, arginine 172, and arginine 179 together coordinate ATP. The active-site Proton acceptor is the aspartate 248. Residues asparagine 249 and aspartate 258 each contribute to the Mg(2+) site. Aspartate 258 contacts ATP.

This sequence belongs to the SELO family. Mg(2+) is required as a cofactor. The cofactor is Mn(2+).

The catalysed reaction is L-seryl-[protein] + ATP = 3-O-(5'-adenylyl)-L-seryl-[protein] + diphosphate. The enzyme catalyses L-threonyl-[protein] + ATP = 3-O-(5'-adenylyl)-L-threonyl-[protein] + diphosphate. It catalyses the reaction L-tyrosyl-[protein] + ATP = O-(5'-adenylyl)-L-tyrosyl-[protein] + diphosphate. It carries out the reaction L-histidyl-[protein] + UTP = N(tele)-(5'-uridylyl)-L-histidyl-[protein] + diphosphate. The catalysed reaction is L-seryl-[protein] + UTP = O-(5'-uridylyl)-L-seryl-[protein] + diphosphate. The enzyme catalyses L-tyrosyl-[protein] + UTP = O-(5'-uridylyl)-L-tyrosyl-[protein] + diphosphate. In terms of biological role, nucleotidyltransferase involved in the post-translational modification of proteins. It can catalyze the addition of adenosine monophosphate (AMP) or uridine monophosphate (UMP) to a protein, resulting in modifications known as AMPylation and UMPylation. The polypeptide is Protein nucleotidyltransferase YdiU (Salmonella arizonae (strain ATCC BAA-731 / CDC346-86 / RSK2980)).